A 568-amino-acid polypeptide reads, in one-letter code: MHAQDKGGILPALSLLLIAVAMVSPSQAAYKLQERYSWNQLDFAFPSARLKEQALASGDYIPTNALPVGVEHFGNRLFVTVPRWRDGIPATLTYINMDHSVTGSPELIPYPDWRANTAGDCANSITTAYRIKVDECGRLWVLDTGTVGIGNTTTNPCPYAINIFDLATDTRIRRYELPAADTNPNTFIANIAVDIGKSCDDAFAYFADELGYGLISYSWELNKSWRFSAHSYFFPDPLRGDFNVAGINFQWGEEGIFGMSLTPIRSDGYRTLYFSPLASHRQFAVSTRILRDETRTEDSYHDFVALDERGPNAHTTSRVMSDDGVELFNLIDQNAVGCWHSSMPYSPQSHGIVDRDDVGLVFPADIKIDENKNVWVLSDRMPVFLLSDLDYSDTNFRIYTAPLATLIENTVCDLRNNAYGPPNTVSIPKQAAPGHSAVGPPLYTTTNQYRPVLSQKPQTSWGPSLPSRNYLPALNGNPGIPGSRNNLNNLGAPGQVVSSVSVSTNTVGPSGIEVPKAYVFNQHNGLNYETSGPHLFPTLQPAPSQLGGGLKTYVNARQSGWWHHQQQG.

Positions 1-28 (MHAQDKGGILPALSLLLIAVAMVSPSQA) are cleaved as a signal peptide. N-linked (GlcNAc...) asparagine glycosylation is found at Asn151 and Asn222.

This sequence belongs to the major royal jelly protein family.

It localises to the secreted. Its function is as follows. Controls the pigmentation pattern of the adult cuticle and larval mouth parts. The protein is Protein yellow (y) of Drosophila subobscura (Fruit fly).